We begin with the raw amino-acid sequence, 1099 residues long: Solute carrier family 12 member 1 (1099 aa).

Over 1–177 (MSLNNSSSVF…EDNKAGAVKF (177 aa)) the chain is Cytoplasmic. The RFXV motif motif lies at 20-23 (RFQV). 2 positions are modified to phosphoserine: Ser-60 and Ser-90. Thr-94, Thr-99, Thr-104, and Thr-117 each carry phosphothreonine. Ser-119 is modified (phosphoserine). Ser-129 carries the post-translational modification Phosphoserine; by AMPK. A Phosphoserine modification is found at Ser-147. Residues 147–169 (SADRVANGEGMPGEEHAENKEED) are disordered. The segment covering 159–169 (GEEHAENKEED) has biased composition (basic and acidic residues). The chain crosses the membrane as a helical span at residues 178 to 198 (GWVKGVLVRCMLNIWGVMLFI). Over 199–201 (RLS) the chain is Extracellular. Residues 202–222 (WIVGEAGIGLGVVIILLSTMV) form a helical membrane-spanning segment. Over 223 to 259 (TSITGLSTSAIATNGFVRGGGAYYLISRSLGPEFGGS) the chain is Cytoplasmic. The chain crosses the membrane as a helical span at residues 260 to 280 (IGLIFAFANAVAVAMYVVGFA). The Extracellular segment spans residues 281-302 (ETVVDLLKESDSMMVDPTNDIR). The helical transmembrane segment at 303–323 (IIGSITVVILLGISVAGMEWE) threads the bilayer. At 324 to 327 (AKAQ) the chain is on the cytoplasmic side. Residues 328-348 (VILLIILLIAIANFFIGTVIP) form a helical membrane-spanning segment. Residues 349-379 (SNNEKKSRGFFNYQASIFAENFGPSFTKGEG) are Extracellular-facing. A helical membrane pass occupies residues 380–400 (FFSVFAIFFPAATGILAGANI). The Cytoplasmic segment spans residues 401-417 (SGDLEDPQDAIPRGTML). A helical transmembrane segment spans residues 418-438 (AIFITTVAYIGVAICVGACVV). Residues 439 to 550 (RDATGSMNDT…NNEPLRGYIL (112 aa)) are Extracellular-facing. 2 N-linked (GlcNAc...) asparagine glycosylation sites follow: Asn-446 and Asn-456. Transmembrane regions (helical) follow at residues 551-571 (TFVI…APII) and 572-592 (SNFF…ASYA). Topologically, residues 593-609 (KSPGWRPAYGIYNMWVS) are extracellular. The helical transmembrane segment at 610 to 630 (LFGAVLCCAVMFVINWWAAVI) threads the bilayer. The Cytoplasmic portion of the chain corresponds to 631 to 1099 (TYVIEFFLYI…NHKNVLTFYS (469 aa)).

This sequence belongs to the SLC12A transporter family. As to quaternary structure, when phosphorylated, interacts with PPP3CB. Post-translationally, phosphorylated at Ser-90, Thr-99 and Thr-104 by OXSR1/OSR1 and STK39/SPAK downstream of WNK kinases (WNK1, WNK2, WNK3 or WNK4), promoting its activity. In terms of tissue distribution, predominant in kidney. The 3 isoforms are differentially distributed within the kidney: B almost exclusively in cortex, F almost exclusively in medulla, and A about equally distributed.

It is found in the apical cell membrane. The catalysed reaction is K(+)(out) + 2 chloride(out) + Na(+)(out) = K(+)(in) + 2 chloride(in) + Na(+)(in). Its activity is regulated as follows. Activated following phosphorylation by OXSR1/OSR1 and STK39/SPAK downstream of WNK kinases (WNK1, WNK2, WNK3 or WNK4). Renal sodium, potassium and chloride ion cotransporter that mediates the transepithelial NaCl reabsorption in the thick ascending limb and plays an essential role in the urinary concentration and volume regulation. Electrically silent transporter system. This chain is Solute carrier family 12 member 1 (SLC12A1), found in Oryctolagus cuniculus (Rabbit).